We begin with the raw amino-acid sequence, 256 residues long: Acetyl-coenzyme A carboxylase carboxyl transferase subunit alpha (256 aa).

The CoA carboxyltransferase C-terminal domain occupies 1 to 236; the sequence is MTDVARILKE…KSHLIDEITQ (236 aa).

This sequence belongs to the AccA family. As to quaternary structure, acetyl-CoA carboxylase is a heterohexamer composed of biotin carboxyl carrier protein (AccB), biotin carboxylase (AccC) and two subunits each of ACCase subunit alpha (AccA) and ACCase subunit beta (AccD).

The protein localises to the cytoplasm. It carries out the reaction N(6)-carboxybiotinyl-L-lysyl-[protein] + acetyl-CoA = N(6)-biotinyl-L-lysyl-[protein] + malonyl-CoA. Its pathway is lipid metabolism; malonyl-CoA biosynthesis; malonyl-CoA from acetyl-CoA: step 1/1. Component of the acetyl coenzyme A carboxylase (ACC) complex. First, biotin carboxylase catalyzes the carboxylation of biotin on its carrier protein (BCCP) and then the CO(2) group is transferred by the carboxyltransferase to acetyl-CoA to form malonyl-CoA. The chain is Acetyl-coenzyme A carboxylase carboxyl transferase subunit alpha from Streptococcus equi subsp. equi (strain 4047).